The sequence spans 111 residues: MKDPYDVVKRHYVTEKAKMLEGLSLGDGEGKKKGSFCKDPKYTFIVAGDATKPMIAEAIEAIYSAKGVKVKKVNTMCVKPQPTRIFRGRRKGRTAGFKKAIVTFVDGHSIG.

This sequence belongs to the universal ribosomal protein uL23 family. As to quaternary structure, part of the 50S ribosomal subunit. Contacts protein L29, and trigger factor when it is bound to the ribosome.

Functionally, one of the early assembly proteins it binds 23S rRNA. One of the proteins that surrounds the polypeptide exit tunnel on the outside of the ribosome. Forms the main docking site for trigger factor binding to the ribosome. The polypeptide is Large ribosomal subunit protein uL23 (Chlamydia trachomatis serovar L2 (strain ATCC VR-902B / DSM 19102 / 434/Bu)).